The sequence spans 116 residues: MFEAKKSAKATLRMIKISPRKLNLITGLIRNLKVSDAIMQLKFSKKRAAVDVKKCLQSAIANAENNDGLDIDNLVVLEAIVGKGSVMKRLVPRARGKAFRIKKFFSNLYITVSEIK.

The protein belongs to the universal ribosomal protein uL22 family. As to quaternary structure, part of the 50S ribosomal subunit.

Functionally, this protein binds specifically to 23S rRNA; its binding is stimulated by other ribosomal proteins, e.g. L4, L17, and L20. It is important during the early stages of 50S assembly. It makes multiple contacts with different domains of the 23S rRNA in the assembled 50S subunit and ribosome. Its function is as follows. The globular domain of the protein is located near the polypeptide exit tunnel on the outside of the subunit, while an extended beta-hairpin is found that lines the wall of the exit tunnel in the center of the 70S ribosome. The sequence is that of Large ribosomal subunit protein uL22 from Orientia tsutsugamushi (strain Boryong) (Rickettsia tsutsugamushi).